A 228-amino-acid polypeptide reads, in one-letter code: ATP-dependent dethiobiotin synthetase BioD (228 aa).

12–17 (EIGKTT) lines the ATP pocket. Threonine 16 serves as a coordination point for Mg(2+). The active site involves lysine 37. Serine 41 contributes to the substrate binding site. Residues aspartate 54, 116–119 (EGAG), and 205–207 (PRL) contribute to the ATP site. The Mg(2+) site is built by aspartate 54 and glutamate 116.

This sequence belongs to the dethiobiotin synthetase family. Homodimer. It depends on Mg(2+) as a cofactor.

The protein resides in the cytoplasm. The catalysed reaction is (7R,8S)-7,8-diammoniononanoate + CO2 + ATP = (4R,5S)-dethiobiotin + ADP + phosphate + 3 H(+). The protein operates within cofactor biosynthesis; biotin biosynthesis; biotin from 7,8-diaminononanoate: step 1/2. Catalyzes a mechanistically unusual reaction, the ATP-dependent insertion of CO2 between the N7 and N8 nitrogen atoms of 7,8-diaminopelargonic acid (DAPA, also called 7,8-diammoniononanoate) to form a ureido ring. This Pseudomonas aeruginosa (strain LESB58) protein is ATP-dependent dethiobiotin synthetase BioD.